We begin with the raw amino-acid sequence, 410 residues long: Beta-arrestin-2 (410 aa).

Tyr48 is modified (phosphotyrosine). 2 positions are modified to hydroxyproline; by PHD2: Pro176 and Pro181. The interaction with TRAF6 stretch occupies residues 241 to 410; sequence ADICLFSTAQ…KDDDCDDQFC (170 aa). Ser361 is modified (phosphoserine). The tract at residues 378–410 is interaction with AP2B1; the sequence is DTNYATDDDIVFEDFARLRLKGMKDDDCDDQFC. Thr383 bears the Phosphothreonine; by CaMK2 mark. The short motif at 386–396 is the [DE]-X(1,2)-F-X-X-[FL]-X-X-X-R motif element; it reads DIVFEDFARLR.

The protein belongs to the arrestin family. In terms of assembly, homooligomer; the self-association is mediated by InsP6-binding. Heterooligomer with ARRB1; the association is mediated by InsP6-binding. Interacts with ADRB2 and CHRM2. Interacts with PDE4A. Interacts with PDE4D. Interacts with MAPK10, MAPK1 and MAPK3. Interacts with DRD2. Interacts with FSHR. Interacts with CLTC. Interacts with HTR2C. Interacts with CCR5. Interacts with CXCR4. Interacts with SRC. Interacts with DUSP16; the interaction is interrupted by stimulation of AGTR1 and activation of MAPK10. Interacts with CHUK; the interaction is enhanced stimulation of ADRB2. Interacts with RELA. Interacts with MDM2; the interaction is enhanced by activation of GPCRs. Interacts with SLC9A5. Interacts with TRAF6. Interacts with IGF1R. Interacts with ENG. Interacts with KIR2DL1, KIR2DL3 and KIR2DL4. Interacts with LDLR. Interacts with AP2B1. Interacts with C5AR1. Interacts with RAF1. Interacts with MAP2K1. Interacts with MAPK1. Interacts with MAPK10; the interaction enhances MAPK10 activation by MAP3K5. Interacts with MAP2K4; the interaction is enhanced by presence of MAP3K5 and MAPK10. Interacts with MAP3K5. Interacts with AKT1. Interacts with IKBKB and MAP3K14. Interacts with SMO (activated). Interacts with GSK3A and GSK3B. Associates with protein phosphatase 2A (PP2A). Interacts with CXCR4; the interaction is dependent on C-terminal phosphorylation of CXCR4 and allows activation of MAPK1 and MAPK3. Interacts with GPR143. Interacts with HCK and CXCR1 (phosphorylated). Interacts with ACKR3 and ACKR4. Interacts with ARRDC1; the interaction is direct. Interacts with GPR61, GPR62 and GPR135. Interacts (via NACHT and LRR domains) with NLRP3; this interaction is direct and inducible by omega-3 polyunsaturated fatty acids (PUFAs). Interacts with FFAR4 (via C-terminus); this interaction is stimulated by long-chain fatty acids (LCFAs). Interacts with GPR35. Interacts with GPR84. Interacts with TIGIT; this interaction inhibits the NF-kappa-B pathway. Interacts with TGFBR3. Post-translationally, phosphorylated at Thr-383 in the cytoplasm; probably dephosphorylated at the plasma membrane. The phosphorylation does not regulate internalization and recycling of ADRB2, interaction with clathrin or AP2B1. The ubiquitination status appears to regulate the formation and trafficking of beta-arrestin-GPCR complexes and signaling. Ubiquitination appears to occur GPCR-specific. Ubiquitinated by MDM2; the ubiquitination is required for rapid internalization of ADRB2. Deubiquitinated by USP33; the deubiquitination leads to a dissociation of the beta-arrestin-GPCR complex. Stimulation of a class A GPCR, such as ADRB2, induces transient ubiquitination and subsequently promotes association with USP33. Stimulation of a class B GPCR promotes a sustained ubiquitination. Deubiquitinated by USP20; allowing USP20 to deubiquitinate TRAF6 leading to inhibition of NF-kappa-B signaling. In terms of processing, hydroxylation by PHD2 modulates the rate of internalization by slowing down recruitment to the plasma membrane and inhibiting subsequent co-internalization with class A receptors. In terms of tissue distribution, predominantly localized in neuronal tissues and in the spleen.

It is found in the cytoplasm. The protein resides in the nucleus. It localises to the cell membrane. Its subcellular location is the membrane. The protein localises to the clathrin-coated pit. It is found in the cytoplasmic vesicle. Functionally, functions in regulating agonist-mediated G-protein coupled receptor (GPCR) signaling by mediating both receptor desensitization and resensitization processes. During homologous desensitization, beta-arrestins bind to the GPRK-phosphorylated receptor and sterically preclude its coupling to the cognate G-protein; the binding appears to require additional receptor determinants exposed only in the active receptor conformation. The beta-arrestins target many receptors for internalization by acting as endocytic adapters (CLASPs, clathrin-associated sorting proteins) and recruiting the GPRCs to the adapter protein 2 complex 2 (AP-2) in clathrin-coated pits (CCPs). However, the extent of beta-arrestin involvement appears to vary significantly depending on the receptor, agonist and cell type. Internalized arrestin-receptor complexes traffic to intracellular endosomes, where they remain uncoupled from G-proteins. Two different modes of arrestin-mediated internalization occur. Class A receptors, like ADRB2, OPRM1, ENDRA, D1AR and ADRA1B dissociate from beta-arrestin at or near the plasma membrane and undergo rapid recycling. Class B receptors, like AVPR2, AGTR1, NTSR1, TRHR and TACR1 internalize as a complex with arrestin and traffic with it to endosomal vesicles, presumably as desensitized receptors, for extended periods of time. Receptor resensitization then requires that receptor-bound arrestin is removed so that the receptor can be dephosphorylated and returned to the plasma membrane. Mediates endocytosis of CCR7 following ligation of CCL19 but not CCL21. Involved in internalization of P2RY1, P2RY4, P2RY6 and P2RY11 and ATP-stimulated internalization of P2RY2. Involved in phosphorylation-dependent internalization of OPRD1 and subsequent recycling or degradation. Involved in ubiquitination of IGF1R. Beta-arrestins function as multivalent adapter proteins that can switch the GPCR from a G-protein signaling mode that transmits short-lived signals from the plasma membrane via small molecule second messengers and ion channels to a beta-arrestin signaling mode that transmits a distinct set of signals that are initiated as the receptor internalizes and transits the intracellular compartment. Acts as a signaling scaffold for MAPK pathways such as MAPK1/3 (ERK1/2) and MAPK10 (JNK3). ERK1/2 and JNK3 activated by the beta-arrestin scaffold are largely excluded from the nucleus and confined to cytoplasmic locations such as endocytic vesicles, also called beta-arrestin signalosomes. Acts as a signaling scaffold for the AKT1 pathway. GPCRs for which the beta-arrestin-mediated signaling relies on both ARRB1 and ARRB2 (codependent regulation) include ADRB2, F2RL1 and PTH1R. For some GPCRs the beta-arrestin-mediated signaling relies on either ARRB1 or ARRB2 and is inhibited by the other respective beta-arrestin form (reciprocal regulation). Increases ERK1/2 signaling in AGTR1- and AVPR2-mediated activation (reciprocal regulation). Involved in CCR7-mediated ERK1/2 signaling involving ligand CCL19. Is involved in type-1A angiotensin II receptor/AGTR1-mediated ERK activity. Is involved in type-1A angiotensin II receptor/AGTR1-mediated MAPK10 activity. Is involved in dopamine-stimulated AKT1 activity in the striatum by disrupting the association of AKT1 with its negative regulator PP2A. Involved in AGTR1-mediated chemotaxis. Appears to function as signaling scaffold involved in regulation of MIP-1-beta-stimulated CCR5-dependent chemotaxis. Involved in attenuation of NF-kappa-B-dependent transcription in response to GPCR or cytokine stimulation by interacting with and stabilizing CHUK. Suppresses UV-induced NF-kappa-B-dependent activation by interacting with CHUK. The function is promoted by stimulation of ADRB2 and dephosphorylation of ARRB2. Involved in IL8-mediated granule release in neutrophils. Involved in p53/TP53-mediated apoptosis by regulating MDM2 and reducing the MDM2-mediated degradation of p53/TP53. May serve as nuclear messenger for GPCRs. Upon stimulation of OR1D2, may be involved in regulation of gene expression during the early processes of fertilization. Also involved in regulation of receptors other than GPCRs. Involved in endocytosis of TGFBR2 and TGFBR3 and down-regulates TGF-beta signaling such as NF-kappa-B activation. Involved in endocytosis of low-density lipoprotein receptor/LDLR. Involved in endocytosis of smoothened homolog/Smo, which also requires GRK2. Involved in endocytosis of SLC9A5. Involved in endocytosis of ENG and subsequent TGF-beta-mediated ERK activation and migration of epithelial cells. Involved in Toll-like receptor and IL-1 receptor signaling through the interaction with TRAF6 which prevents TRAF6 autoubiquitination and oligomerization required for activation of NF-kappa-B and JUN. Involved in insulin resistance by acting as insulin-induced signaling scaffold for SRC, AKT1 and INSR. Involved in regulation of inhibitory signaling of natural killer cells by recruiting PTPN6 and PTPN11 to KIR2DL1. Involved in the internalization of the atypical chemokine receptor ACKR3. Acts as an adapter protein coupling FFAR4 receptor to specific downstream signaling pathways, as well as mediating receptor endocytosis. During the activation step of NLRP3 inflammasome, directly associates with NLRP3 leading to inhibition of pro-inflammatory cytokine release and inhibition of inflammation. This chain is Beta-arrestin-2 (Arrb2), found in Rattus norvegicus (Rat).